A 502-amino-acid polypeptide reads, in one-letter code: ATP synthase subunit beta (502 aa).

156–163 (GGAGVGKT) contacts ATP.

The protein belongs to the ATPase alpha/beta chains family. In terms of assembly, F-type ATPases have 2 components, CF(1) - the catalytic core - and CF(0) - the membrane proton channel. CF(1) has five subunits: alpha(3), beta(3), gamma(1), delta(1), epsilon(1). CF(0) has three main subunits: a(1), b(2) and c(9-12). The alpha and beta chains form an alternating ring which encloses part of the gamma chain. CF(1) is attached to CF(0) by a central stalk formed by the gamma and epsilon chains, while a peripheral stalk is formed by the delta and b chains.

The protein resides in the cell membrane. It carries out the reaction ATP + H2O + 4 H(+)(in) = ADP + phosphate + 5 H(+)(out). Produces ATP from ADP in the presence of a proton gradient across the membrane. The catalytic sites are hosted primarily by the beta subunits. The polypeptide is ATP synthase subunit beta (Cellulophaga lytica (Cytophaga lytica)).